Here is a 252-residue protein sequence, read N- to C-terminus: 2-succinyl-6-hydroxy-2,4-cyclohexadiene-1-carboxylate synthase (252 aa).

The protein belongs to the AB hydrolase superfamily. MenH family. In terms of assembly, monomer.

The catalysed reaction is 5-enolpyruvoyl-6-hydroxy-2-succinyl-cyclohex-3-ene-1-carboxylate = (1R,6R)-6-hydroxy-2-succinyl-cyclohexa-2,4-diene-1-carboxylate + pyruvate. The protein operates within quinol/quinone metabolism; 1,4-dihydroxy-2-naphthoate biosynthesis; 1,4-dihydroxy-2-naphthoate from chorismate: step 3/7. It participates in quinol/quinone metabolism; menaquinone biosynthesis. In terms of biological role, catalyzes a proton abstraction reaction that results in 2,5-elimination of pyruvate from 2-succinyl-5-enolpyruvyl-6-hydroxy-3-cyclohexene-1-carboxylate (SEPHCHC) and the formation of 2-succinyl-6-hydroxy-2,4-cyclohexadiene-1-carboxylate (SHCHC). The polypeptide is 2-succinyl-6-hydroxy-2,4-cyclohexadiene-1-carboxylate synthase (Escherichia coli (strain K12 / MC4100 / BW2952)).